A 329-amino-acid chain; its full sequence is Malate dehydrogenase (329 aa).

11–17 (GAAGQIG) serves as a coordination point for NAD(+). R92 and R98 together coordinate substrate. NAD(+) contacts are provided by residues N105, Q112, and 129-131 (VGN). Substrate is bound by residues N131 and R165. H190 functions as the Proton acceptor in the catalytic mechanism.

It belongs to the LDH/MDH superfamily. MDH type 2 family.

The enzyme catalyses (S)-malate + NAD(+) = oxaloacetate + NADH + H(+). Functionally, catalyzes the reversible oxidation of malate to oxaloacetate. In Laribacter hongkongensis (strain HLHK9), this protein is Malate dehydrogenase.